A 409-amino-acid chain; its full sequence is Multidrug transporter MdfA (409 aa).

The Cytoplasmic portion of the chain corresponds to 1–15; sequence MQTSFSPATRLGRRA. Residues 16 to 36 form a helical membrane-spanning segment; that stretch reads LLFPLCLVLFEFAAYIANDMI. Over 37–52 the chain is Periplasmic; the sequence is QPGMLAVVAEFNASVE. Residues 53 to 73 form a helical membrane-spanning segment; it reads WVPTSMTAYLAGGMFLQWLLG. At 74–82 the chain is on the cytoplasmic side; sequence PLSDRRGRR. The chain crosses the membrane as a helical span at residues 83–103; the sequence is PVMLAGVAFFVVTCLAILLVN. At 104 to 107 the chain is on the periplasmic side; sequence SIEQ. Residues 108 to 128 form a helical membrane-spanning segment; that stretch reads FIAMRFLQGIGLCFIGAVGYA. Over 129-144 the chain is Cytoplasmic; that stretch reads TIQESFEEAVCIKITA. Residues 145–165 traverse the membrane as a helical segment; sequence LMANVALIAPLLGPLAGAALI. The Periplasmic portion of the chain corresponds to 166 to 168; the sequence is HVA. Residues 169–189 traverse the membrane as a helical segment; that stretch reads PWQTMFVLFAVLGAISFAGLW. Topologically, residues 190–226 are cytoplasmic; that stretch reads RAMPETASLKGEKLSVANMWRDYKQVLANRRFLCGSL. The helical transmembrane segment at 227–247 threads the bilayer; the sequence is ALGFASLPLLAWIAQSPVILI. Over 248-254 the chain is Periplasmic; it reads SGEQLST. Residues 255–275 form a helical membrane-spanning segment; that stretch reads FEYGILQVPIFGALIIGNLTL. Over 276-286 the chain is Cytoplasmic; sequence ARLSGKTSIPQ. The chain crosses the membrane as a helical span at residues 287–307; it reads LIRYGAGPMIVGLMIAAGSTL. Over 308 to 314 the chain is Periplasmic; that stretch reads YSSHAYL. A helical transmembrane segment spans residues 315–335; the sequence is WMTAGLSLYAFGIGLANAGLV. Topologically, residues 336–347 are cytoplasmic; the sequence is RLTLFASDISKG. Residues 348–368 form a helical membrane-spanning segment; sequence TVSAAMGMISMMIFTLGIELA. Residues 369–378 are Periplasmic-facing; the sequence is KVAYLWGDSR. Residues 379–399 traverse the membrane as a helical segment; sequence GFNLFNLMSGLLWLGLVMVFI. Topologically, residues 400–409 are cytoplasmic; the sequence is RRQPEAVATE.

Belongs to the major facilitator superfamily. MdfA family. Monomer.

It is found in the cell inner membrane. Efflux pump driven by the proton motive force. Confers resistance to a broad spectrum of chemically unrelated drugs. The polypeptide is Multidrug transporter MdfA (mdfA) (Yersinia pestis (strain D182038)).